Here is a 556-residue protein sequence, read N- to C-terminus: 2-succinyl-5-enolpyruvyl-6-hydroxy-3-cyclohexene-1-carboxylate synthase (556 aa).

The protein belongs to the TPP enzyme family. MenD subfamily. Homodimer. Mg(2+) serves as cofactor. It depends on Mn(2+) as a cofactor. The cofactor is thiamine diphosphate.

It catalyses the reaction isochorismate + 2-oxoglutarate + H(+) = 5-enolpyruvoyl-6-hydroxy-2-succinyl-cyclohex-3-ene-1-carboxylate + CO2. The protein operates within quinol/quinone metabolism; 1,4-dihydroxy-2-naphthoate biosynthesis; 1,4-dihydroxy-2-naphthoate from chorismate: step 2/7. Its pathway is quinol/quinone metabolism; menaquinone biosynthesis. Functionally, catalyzes the thiamine diphosphate-dependent decarboxylation of 2-oxoglutarate and the subsequent addition of the resulting succinic semialdehyde-thiamine pyrophosphate anion to isochorismate to yield 2-succinyl-5-enolpyruvyl-6-hydroxy-3-cyclohexene-1-carboxylate (SEPHCHC). The sequence is that of 2-succinyl-5-enolpyruvyl-6-hydroxy-3-cyclohexene-1-carboxylate synthase from Escherichia coli O8 (strain IAI1).